A 262-amino-acid chain; its full sequence is MRIALCIEYDGAEYYGWQRQRDVNSVQEELEKALTIVANEPIEVHCAGRTDAGVHGTGQVVHFDTTSSRKLAAWMMGANANLPKNIAVRWAKEVNEDFHARFTATARRYRYIIYNNRLRPAILGHGVSHYHDALDANLMHEAGQYLLGENDFTSFRAVHCQSRSPWRNLMHLKVTRHGDFIVIDIKANAFVHHMVRNITGSLIEVGKGKQKPEWIKWLLEAKDRKLAGATAKAEGLYLVDVDYPLEWELPRVPLGPLFLDND.

Catalysis depends on Asp-51, which acts as the Nucleophile. Substrate is bound at residue Tyr-109.

The protein belongs to the tRNA pseudouridine synthase TruA family. Homodimer.

It catalyses the reaction uridine(38/39/40) in tRNA = pseudouridine(38/39/40) in tRNA. In terms of biological role, formation of pseudouridine at positions 38, 39 and 40 in the anticodon stem and loop of transfer RNAs. The protein is tRNA pseudouridine synthase A of Aliivibrio fischeri (strain ATCC 700601 / ES114) (Vibrio fischeri).